Here is a 227-residue protein sequence, read N- to C-terminus: ATP synthase F(0) complex subunit a (227 aa).

The next 6 membrane-spanning stretches (helical) occupy residues Leu14–Pro34, Trp69–Leu89, Leu99–Leu119, Leu137–Leu157, Phe180–Leu200, and Ile202–Tyr222.

This sequence belongs to the ATPase A chain family. Component of the ATP synthase complex composed at least of ATP5F1A/subunit alpha, ATP5F1B/subunit beta, ATP5MC1/subunit c (homooctomer), MT-ATP6/subunit a, MT-ATP8/subunit 8, ATP5ME/subunit e, ATP5MF/subunit f, ATP5MG/subunit g, ATP5MK/subunit k, ATP5MJ/subunit j, ATP5F1C/subunit gamma, ATP5F1D/subunit delta, ATP5F1E/subunit epsilon, ATP5PF/subunit F6, ATP5PB/subunit b, ATP5PD/subunit d, ATP5PO/subunit OSCP. ATP synthase complex consists of a soluble F(1) head domain (subunits alpha(3) and beta(3)) - the catalytic core - and a membrane F(0) domain - the membrane proton channel (subunits c, a, 8, e, f, g, k and j). These two domains are linked by a central stalk (subunits gamma, delta, and epsilon) rotating inside the F1 region and a stationary peripheral stalk (subunits F6, b, d, and OSCP). Interacts with DNAJC30; interaction is direct.

It is found in the mitochondrion inner membrane. It carries out the reaction H(+)(in) = H(+)(out). In terms of biological role, subunit a, of the mitochondrial membrane ATP synthase complex (F(1)F(0) ATP synthase or Complex V) that produces ATP from ADP in the presence of a proton gradient across the membrane which is generated by electron transport complexes of the respiratory chain. ATP synthase complex consist of a soluble F(1) head domain - the catalytic core - and a membrane F(1) domain - the membrane proton channel. These two domains are linked by a central stalk rotating inside the F(1) region and a stationary peripheral stalk. During catalysis, ATP synthesis in the catalytic domain of F(1) is coupled via a rotary mechanism of the central stalk subunits to proton translocation. With the subunit c (ATP5MC1), forms the proton-conducting channel in the F(0) domain, that contains two crucial half-channels (inlet and outlet) that facilitate proton movement from the mitochondrial intermembrane space (IMS) into the matrix. Protons are taken up via the inlet half-channel and released through the outlet half-channel, following a Grotthuss mechanism. The sequence is that of ATP synthase F(0) complex subunit a from Squalus acanthias (Spiny dogfish).